The sequence spans 572 residues: Proline--tRNA ligase (572 aa).

This sequence belongs to the class-II aminoacyl-tRNA synthetase family. ProS type 1 subfamily. Homodimer.

It is found in the cytoplasm. It catalyses the reaction tRNA(Pro) + L-proline + ATP = L-prolyl-tRNA(Pro) + AMP + diphosphate. In terms of biological role, catalyzes the attachment of proline to tRNA(Pro) in a two-step reaction: proline is first activated by ATP to form Pro-AMP and then transferred to the acceptor end of tRNA(Pro). As ProRS can inadvertently accommodate and process non-cognate amino acids such as alanine and cysteine, to avoid such errors it has two additional distinct editing activities against alanine. One activity is designated as 'pretransfer' editing and involves the tRNA(Pro)-independent hydrolysis of activated Ala-AMP. The other activity is designated 'posttransfer' editing and involves deacylation of mischarged Ala-tRNA(Pro). The misacylated Cys-tRNA(Pro) is not edited by ProRS. This is Proline--tRNA ligase from Bacillus licheniformis (strain ATCC 14580 / DSM 13 / JCM 2505 / CCUG 7422 / NBRC 12200 / NCIMB 9375 / NCTC 10341 / NRRL NRS-1264 / Gibson 46).